The chain runs to 127 residues: Glycine cleavage system H protein 1 (127 aa).

Residues 20-101 (SVTVGITPYA…LGAGWFFRFI (82 aa)) form the Lipoyl-binding domain. Lys60 bears the N6-lipoyllysine mark.

Belongs to the GcvH family. In terms of assembly, the glycine cleavage system is composed of four proteins: P, T, L and H. The cofactor is (R)-lipoate.

Functionally, the glycine cleavage system catalyzes the degradation of glycine. The H protein shuttles the methylamine group of glycine from the P protein to the T protein. This is Glycine cleavage system H protein 1 from Pseudomonas syringae pv. tomato (strain ATCC BAA-871 / DC3000).